The chain runs to 250 residues: Small ribosomal subunit protein uS3z (250 aa).

The region spanning 21–92 is the KH type-2 domain; sequence LNEVLTRELA…SVELYAEKVN (72 aa).

It belongs to the universal ribosomal protein uS3 family. In terms of assembly, interacts with SNRNP35.

This Arabidopsis thaliana (Mouse-ear cress) protein is Small ribosomal subunit protein uS3z (RPS3A).